A 657-amino-acid chain; its full sequence is MLPKIFYLSLLPAALGHPHLQPRLDNGLARTPQMGWNTYNHYSCSPNETIVRSNAQALVDLGLASLGYRYVTTDCGWTVADRLSDGSLTWNETLFPKGFPALGKYLHDLDLLFGVYQDSGIKLCGSPPDNVGSLYHEDQDARTFASWEVDSLKYDNCYSDAATGYPNVNYEPSTSPQPRFANMSRALAAQNRSMVFQVCEWGIDFPARWAPALGHSWRIGNDIIPHWRAIYRTLNQAVPQTSFAGPGQWPDLDMLFVGNDILSIPEEQTHFSLWAILKSPLTIGAALKDDNTSINDESLQILKQEEVIGYNQDSLGVSASLRRRWTEEGYEVWSGPLSGGRTVAALINWKDEARELTLDLPDIGLQFAGTVKNIWDGTTAQNVKTSYTAKVQSHGTILLELQDTTASGQYPTDTFATSTDSSTTFESIYGVTTSFRYNITVKLSEASSSGDVNIQSTASNKTITAQVSASGTEASAQIPLLAGSSNSITIVSPQSVDAITITPPNGTYFPNTAFTTTGDADTVSCGAGYCQPVGSKIGNISTNGTARAVIPATAGTKYLAIDYINNDVAFDSAWDWGSNSRNLTVSVNGNKPVRIEVPLSGQHSELFGPGKGWWDTATIGVLTEGWKDGDNDVVIGNEGGESGFTSYGPDFVGLRVL.

An N-terminal signal peptide occupies residues 1-16 (MLPKIFYLSLLPAALG). 2 N-linked (GlcNAc...) asparagine glycosylation sites follow: N47 and N91. A disulfide bond links C124 and C157. The active-site Nucleophile is D155. N182 and N191 each carry an N-linked (GlcNAc...) asparagine glycan. Residue 200-204 (EWGID) coordinates substrate. Residue D222 is the Proton donor of the active site. N-linked (GlcNAc...) asparagine glycosylation is found at N291, N438, N460, N505, N539, N543, and N582.

It belongs to the glycosyl hydrolase 27 family.

It localises to the secreted. It catalyses the reaction Hydrolysis of terminal, non-reducing alpha-D-galactose residues in alpha-D-galactosides, including galactose oligosaccharides, galactomannans and galactolipids.. In terms of biological role, hydrolyzes a variety of simple alpha-D-galactoside as well as more complex molecules such as oligosaccharides and polysaccharides. This is Probable alpha-galactosidase D (aglD) from Aspergillus oryzae (strain ATCC 42149 / RIB 40) (Yellow koji mold).